Here is a 494-residue protein sequence, read N- to C-terminus: Probable terminase, large subunit (494 aa).

Position 26–33 (26–33 (ADVLFGKT)) interacts with ATP. The Walker A motif motif lies at 56–63 (SGHGTGKS). The Walker B motif motif lies at 158–163 (LYIIDE). Residue Glu-163 is the For ATPase activity of the active site. Residues Asp-293, Asp-356, and Asp-446 each contribute to the Mg(2+) site.

Belongs to the punalikevirus large terminase family. As to quaternary structure, interacts with pacA protein. The cofactor is Mg(2+).

Functionally, component of the molecular motor that translocates genomic DNA in empty capsid during DNA packaging. Heterooligomerize with small terminase protein to be docked on capsid portal protein. Forms a ring-like structure through which genomic DNA is translocated into the capsid. May have or induce an endonuclease activity to cleave the genome concatemer after encapsidation. This chain is Probable terminase, large subunit (pacB), found in Escherichia coli (Bacteriophage P7).